Consider the following 110-residue polypeptide: UPF0060 membrane protein Rpic_4131 (110 aa).

A run of 4 helical transmembrane segments spans residues 8 to 28, 33 to 53, 65 to 85, and 88 to 108; these read VLFAFTAVAEIVGCYLPWLVL, PFWLLLPAAASLALFAWLLTL, YGGVYIAVALVWLRLVDGVAL, and WDVGGAAIALTGMAVIALQPQ.

It belongs to the UPF0060 family.

Its subcellular location is the cell inner membrane. In Ralstonia pickettii (strain 12J), this protein is UPF0060 membrane protein Rpic_4131.